A 184-amino-acid polypeptide reads, in one-letter code: Muscle-specific protein 20 (184 aa).

A Calponin-homology (CH) domain is found at 17–122; that stretch reads PEMDKEAQEW…NTIFALGRAT (106 aa). The stretch at 157 to 181 is one Calponin-like repeat; the sequence is VGLQAGSNKGATQAGQNLGAGRKIL.

It belongs to the calponin family. Found in synchronous muscle; not found in asynchronous indirect flight muscle.

This chain is Muscle-specific protein 20 (Mp20), found in Drosophila melanogaster (Fruit fly).